Consider the following 686-residue polypeptide: Glycine--tRNA ligase beta subunit (686 aa).

This sequence belongs to the class-II aminoacyl-tRNA synthetase family. As to quaternary structure, tetramer of two alpha and two beta subunits.

It localises to the cytoplasm. It carries out the reaction tRNA(Gly) + glycine + ATP = glycyl-tRNA(Gly) + AMP + diphosphate. The chain is Glycine--tRNA ligase beta subunit from Halothermothrix orenii (strain H 168 / OCM 544 / DSM 9562).